A 239-amino-acid polypeptide reads, in one-letter code: Cytochrome b6-f complex iron-sulfur subunit 1, cyanelle (239 aa).

The N-terminal 60 residues, 1-60 (MAFTTTAVVAPRGAKITGQSSTCAIQNGKTVAVGTSKQVGSFKPVFAAAKPAKETTFSVS), are a transit peptide targeting the cyanelle. Residues 81–101 (LLGAIAGPVAGAGGPFVSFLV) traverse the membrane as a helical segment. One can recognise a Rieske domain in the interval 125 to 221 (VSSWLETHKP…VSVLEDGVVA (97 aa)). Residues Cys-167, His-169, Cys-185, and His-188 each contribute to the [2Fe-2S] cluster site. A disulfide bridge connects residues Cys-172 and Cys-187.

Belongs to the Rieske iron-sulfur protein family. The 4 large subunits of the cytochrome b6-f complex are cytochrome b6, subunit IV (17 kDa polypeptide, petD), cytochrome f and the Rieske protein, while the 4 small subunits are petG, petL, petM and petN. The complex functions as a dimer. [2Fe-2S] cluster serves as cofactor.

It is found in the plastid. It localises to the cyanelle thylakoid membrane. The catalysed reaction is 2 oxidized [plastocyanin] + a plastoquinol + 2 H(+)(in) = 2 reduced [plastocyanin] + a plastoquinone + 4 H(+)(out). In terms of biological role, component of the cytochrome b6-f complex, which mediates electron transfer between photosystem II (PSII) and photosystem I (PSI), cyclic electron flow around PSI, and state transitions. In Cyanophora paradoxa, this protein is Cytochrome b6-f complex iron-sulfur subunit 1, cyanelle (petC-1).